We begin with the raw amino-acid sequence, 284 residues long: Release factor glutamine methyltransferase (284 aa).

Residues 121–125 (GTGTG), aspartate 144, tryptophan 172, and asparagine 188 contribute to the S-adenosyl-L-methionine site. 188–191 (NPPY) is a binding site for substrate.

Belongs to the protein N5-glutamine methyltransferase family. PrmC subfamily.

It catalyses the reaction L-glutaminyl-[peptide chain release factor] + S-adenosyl-L-methionine = N(5)-methyl-L-glutaminyl-[peptide chain release factor] + S-adenosyl-L-homocysteine + H(+). Functionally, methylates the class 1 translation termination release factors RF1/PrfA and RF2/PrfB on the glutamine residue of the universally conserved GGQ motif. This is Release factor glutamine methyltransferase from Aliivibrio fischeri (strain ATCC 700601 / ES114) (Vibrio fischeri).